The primary structure comprises 216 residues: Octanoyltransferase (216 aa).

The BPL/LPL catalytic domain maps to Lys-24–Asn-212. Residues Arg-69 to His-76, Ser-140 to Gly-142, and Gly-153 to Ala-155 contribute to the substrate site. The active-site Acyl-thioester intermediate is Cys-171.

This sequence belongs to the LipB family.

The protein localises to the cytoplasm. It carries out the reaction octanoyl-[ACP] + L-lysyl-[protein] = N(6)-octanoyl-L-lysyl-[protein] + holo-[ACP] + H(+). It participates in protein modification; protein lipoylation via endogenous pathway; protein N(6)-(lipoyl)lysine from octanoyl-[acyl-carrier-protein]: step 1/2. In terms of biological role, catalyzes the transfer of endogenously produced octanoic acid from octanoyl-acyl-carrier-protein onto the lipoyl domains of lipoate-dependent enzymes. Lipoyl-ACP can also act as a substrate although octanoyl-ACP is likely to be the physiological substrate. This is Octanoyltransferase from Leptospira interrogans serogroup Icterohaemorrhagiae serovar Lai (strain 56601).